A 213-amino-acid polypeptide reads, in one-letter code: Ras-related protein Rab-25 (213 aa).

9 residues coordinate GTP: S21, G24, K25, T26, N27, S38, H39, T43, and T44. T26 is a binding site for Mg(2+). 2 consecutive short sequence motifs (switch) follow at residues 35-49 (NEFS…GVEF) and 67-84 (DTAG…YYRG). Residues T44 and D67 each coordinate Mg(2+). GTP contacts are provided by G70, N125, K126, D128, A156, and L157. S-geranylgeranyl cysteine attachment occurs at residues C209 and C210. C210 carries the cysteine methyl ester modification. A propeptide spans 211 to 213 (INL) (removed in mature form).

The protein belongs to the small GTPase superfamily. Rab family. In terms of assembly, interacts (GTP-bound form) with RAB11FIP1, RAB11FIP2, RAB11FIP3 and RAB11FIP4. Interacts (via the hypervariable C-terminal region) with ITGB1 (via the cytoplasmic region); the interaction is GTP-dependent. Interacts with ITGAV. Associates with the integrin alpha-V/beta-1 heterodimer. Interacts with VPS33B. Mg(2+) is required as a cofactor. Expression is restricted to epithelial cells. Expressed in the gastrointestinal mucosa, (highest expression seen in the ileum and colon), kidney, and lung. A very minor and variable level of expression is seen in the splenic tissue.

It localises to the cell membrane. Its subcellular location is the cell projection. The protein resides in the pseudopodium membrane. It is found in the cytoplasmic vesicle. It carries out the reaction GTP + H2O = GDP + phosphate + H(+). Its activity is regulated as follows. Regulated by guanine nucleotide exchange factors (GEFs) which promote the exchange of bound GDP for free GTP. Regulated by GTPase activating proteins (GAPs) which increase the GTP hydrolysis activity. Inhibited by GDP dissociation inhibitors (GDIs) which prevent Rab-GDP dissociation. The small GTPases Rab are key regulators of intracellular membrane trafficking, from the formation of transport vesicles to their fusion with membranes. Rabs cycle between an inactive GDP-bound form and an active GTP-bound form that is able to recruit to membranes different set of downstream effectors directly responsible for vesicle formation, movement, tethering and fusion. RAB25 regulates epithelial cell differentiation, proliferation and survival, thereby playing key roles in tumorigenesis. Promotes invasive migration of cells in which it functions to localize and maintain integrin alpha-V/beta-1 at the tips of extending pseudopodia. Involved in the regulation of epithelial morphogenesis through the control of CLDN4 expression and localization at tight junctions. May selectively regulate the apical recycling pathway. Together with MYO5B regulates transcytosis. In Oryctolagus cuniculus (Rabbit), this protein is Ras-related protein Rab-25 (RAB25).